A 432-amino-acid polypeptide reads, in one-letter code: Adenylosuccinate synthetase (432 aa).

Residues 13 to 19 (GDEGKGK) and 41 to 43 (GHT) each bind GTP. Catalysis depends on aspartate 14, which acts as the Proton acceptor. The Mg(2+) site is built by aspartate 14 and glycine 41. IMP contacts are provided by residues 14-17 (DEGK), 39-42 (NAGH), threonine 130, arginine 144, glutamine 225, threonine 240, and arginine 304. The active-site Proton donor is histidine 42. 300 to 306 (ATTGRKR) contacts substrate. Residues arginine 306, 332–334 (KLD), and 415–417 (STG) contribute to the GTP site.

It belongs to the adenylosuccinate synthetase family. In terms of assembly, homodimer. Requires Mg(2+) as cofactor.

It is found in the cytoplasm. The enzyme catalyses IMP + L-aspartate + GTP = N(6)-(1,2-dicarboxyethyl)-AMP + GDP + phosphate + 2 H(+). Its pathway is purine metabolism; AMP biosynthesis via de novo pathway; AMP from IMP: step 1/2. Functionally, plays an important role in the de novo pathway of purine nucleotide biosynthesis. Catalyzes the first committed step in the biosynthesis of AMP from IMP. This chain is Adenylosuccinate synthetase, found in Pseudoalteromonas atlantica (strain T6c / ATCC BAA-1087).